A 228-amino-acid polypeptide reads, in one-letter code: MKELRSKLEKDYGIVFANQELLDTAFTHTSYANEHRLLNISHNERLEFLGDAVLQLLISQYLFTKYPQKAEGDLSKLRSMIVREESLAGFSRLCGFDHYIKLGKGEEKSGGRNRDTILGDLFEAFLGALLLDKGVEVVHAFVNKVMIPHVEKGTYERVKDYKTSLQELLQSHGDVKIDYQVTNESGPAHAKEFEVTVSVNQENLSQGIGRSKKAAEQDAAKNALATLQ.

Residues R5 to G134 form the RNase III domain. E47 provides a ligand contact to Mg(2+). D51 is an active-site residue. 2 residues coordinate Mg(2+): D120 and E123. Residue E123 is part of the active site. The DRBM domain maps to D160–Q228.

It belongs to the ribonuclease III family. As to quaternary structure, homodimer. Mg(2+) is required as a cofactor.

It localises to the cytoplasm. The catalysed reaction is Endonucleolytic cleavage to 5'-phosphomonoester.. In terms of biological role, digests double-stranded RNA. Involved in the processing of primary rRNA transcript to yield the immediate precursors to the large and small rRNAs (23S and 16S). Processes some mRNAs, and tRNAs when they are encoded in the rRNA operon. Processes pre-crRNA and tracrRNA of type II CRISPR loci if present in the organism. The sequence is that of Ribonuclease 3 from Streptococcus agalactiae serotype III (strain NEM316).